The primary structure comprises 1128 residues: Inactive phospholipase C-like protein 2 (1128 aa).

Residues 1 to 129 (MAECGRGAAG…KKTVSFSSMP (129 aa)) are disordered. Residue A2 is modified to N-acetylalanine. At S16 the chain carries Phosphoserine. Positions 20–30 (ALGAKGALKAG) are enriched in low complexity. Residues 31-43 (AGEGGGGGGGGRL) show a composition bias toward gly residues. T85 is subject to Phosphothreonine. In terms of domain architecture, PH spans 142–252 (NSMVEGSELK…WVTGLRYLIS (111 aa)). Positions 427-571 (QDMKQPLSHY…LKGKILIKAK (145 aa)) constitute a PI-PLC X-box domain. The residue at position 585 (T585) is a Phosphothreonine. The PI-PLC Y-box domain maps to 619-735 (LSELVSICKS…GYVLRPAIMR (117 aa)). The C2 domain maps to 735 to 864 (REEVSFFSAN…TGYRHVPLQS (130 aa)). The tract at residues 1100 to 1128 (KPGTENSEAQKPRRSLEAIPEKASDENGD) is disordered. Residues 1107 to 1128 (EAQKPRRSLEAIPEKASDENGD) are compositionally biased toward basic and acidic residues. Residue S1114 is modified to Phosphoserine.

Ubiquitously expressed, with a strong expression in skeletal muscle.

It localises to the cytoplasm. In terms of biological role, may play an role in the regulation of Ins(1,4,5)P3 around the endoplasmic reticulum. The polypeptide is Inactive phospholipase C-like protein 2 (Plcl2) (Mus musculus (Mouse)).